The primary structure comprises 644 residues: Exoribonuclease 2 (644 aa).

Residues Arg189–Lys516 form the RNB domain. The S1 motif domain occupies Asp561–Val643.

Belongs to the RNR ribonuclease family. RNase II subfamily.

It localises to the cytoplasm. The enzyme catalyses Exonucleolytic cleavage in the 3'- to 5'-direction to yield nucleoside 5'-phosphates.. Functionally, involved in mRNA degradation. Hydrolyzes single-stranded polyribonucleotides processively in the 3' to 5' direction. This is Exoribonuclease 2 from Shigella boydii serotype 18 (strain CDC 3083-94 / BS512).